The sequence spans 245 residues: tRNA pseudouridine synthase A (245 aa).

Aspartate 52 acts as the Nucleophile in catalysis. Tyrosine 111 is a substrate binding site.

This sequence belongs to the tRNA pseudouridine synthase TruA family. In terms of assembly, homodimer.

The catalysed reaction is uridine(38/39/40) in tRNA = pseudouridine(38/39/40) in tRNA. Functionally, formation of pseudouridine at positions 38, 39 and 40 in the anticodon stem and loop of transfer RNAs. The chain is tRNA pseudouridine synthase A from Rhodopseudomonas palustris (strain BisB18).